The primary structure comprises 207 residues: ATP phosphoribosyltransferase (207 aa).

Belongs to the ATP phosphoribosyltransferase family. Short subfamily. As to quaternary structure, heteromultimer composed of HisG and HisZ subunits.

The protein localises to the cytoplasm. It carries out the reaction 1-(5-phospho-beta-D-ribosyl)-ATP + diphosphate = 5-phospho-alpha-D-ribose 1-diphosphate + ATP. The protein operates within amino-acid biosynthesis; L-histidine biosynthesis; L-histidine from 5-phospho-alpha-D-ribose 1-diphosphate: step 1/9. Functionally, catalyzes the condensation of ATP and 5-phosphoribose 1-diphosphate to form N'-(5'-phosphoribosyl)-ATP (PR-ATP). Has a crucial role in the pathway because the rate of histidine biosynthesis seems to be controlled primarily by regulation of HisG enzymatic activity. This chain is ATP phosphoribosyltransferase, found in Dictyoglomus thermophilum (strain ATCC 35947 / DSM 3960 / H-6-12).